Here is a 983-residue protein sequence, read N- to C-terminus: Nuclear factor NF-kappa-B p105 subunit (983 aa).

One can recognise an RHD domain in the interval 47 to 372 (PYLQIIEQPK…EVQRKRQKLM (326 aa)). S-nitrosocysteine is present on cysteine 66. The residue at position 342 (serine 342) is a Phosphoserine; by PKA. Residues 365–370 (QRKRQK) carry the Nuclear localization signal motif. A GRR region spans residues 377-397 (DGYGGGSGAGGGGMFGGGGGG). The disordered stretch occupies residues 423 to 454 (KSNAGMKHELSNSTVKKDEESSDKQSDKWDTK). Basic and acidic residues predominate over residues 428–454 (MKHELSNSTVKKDEESSDKQSDKWDTK). 7 ANK repeats span residues 540–569 (NGDN…DMNY), 579–608 (LYQT…NVNL), 612–641 (HGNS…ASSM), 648–677 (EGLS…DVNA), 682–712 (SGRT…DVDS), 716–745 (DGTT…DPHV), and 769–799 (PGTT…AVSE). The Death domain maps to 804-891 (QGPLRELNES…EAIEVIQKAL (88 aa)). Serine 938 is modified (phosphoserine).

In terms of assembly, active NF-kappa-B is a heterodimer of an about 50 kDa DNA-binding subunit and the weak DNA-binding subunit p65. Two heterodimers might form a labile tetramer. Generation of the NF-kappa-B p50 (Nuclear factor NF-kappa-B p50 subunit) transcription factor takes place both cotranslationally and post-translationally via non-mutually exclusive mechanisms. A cotranslational processing allows the production of both p50 and p105 (Nuclear factor NF-kappa-B p105 subunit) from a single NFKB1 mRNA. While translation occurs, the particular unfolded structure after the GRR repeat region acts as a substrate for the proteasome, promoting degradation of the C-terminus. The GRR acts as a proteasomal 'stop signal', protecting the region upstream of the GRR from degradation and promoting generation of p50. It is unclear if limited proteasome degradation during cotranslational processing depends on ubiquitination. NF-kappa-B p50 is also generated post-translationally following ubiquitination by the KPC complex, leading to limited processing by the proteasome downstream of the GRR region, thereby generating p50. Post-translationally, phosphorylation at the C-terminus by IKBKB/IKKB acts as a signal for ubiquitination and promotes either complete degradation or processing to generate the NF-kappa-B p50 (Nuclear factor NF-kappa-B p50 subunit). Phosphorylation at Ser-938 are required for BTRC/BTRCP-mediated ubiquitination and proteolysis. Phosphorylation at Ser-938 is also required for ubiquitination by the KPC complex and limited processing to generate NF-kappa-B p50 (Nuclear factor NF-kappa-B p50 subunit). In terms of processing, polyubiquitinated at multiple Lys residues in the C-terminus. Polyubiquitinated by the SCF(FBXW11) and SCF(BTRC) complexes following phosphorylation at Ser-938, leading to its complete degradation. In contrast, polyubiquitination by the KPC complex following phosphorylation at Ser-938 leads to limited proteosomal processing and generation of the active NF-kappa-B p50 (Nuclear factor NF-kappa-B p50 subunit). S-nitrosylation of Cys-66 affects DNA binding. Post-translationally, the covalent modification of cysteine by 15-deoxy-Delta12,14-prostaglandin-J2 is autocatalytic and reversible. It may occur as an alternative to other cysteine modifications, such as S-nitrosylation and S-palmitoylation.

It localises to the cytoplasm. It is found in the nucleus. In terms of biological role, P105 is the precursor of the active p50 subunit (Nuclear factor NF-kappa-B p50 subunit) of the nuclear factor NF-kappa-B. The precursor protein itself does not bind to DNA. Acts as a cytoplasmic retention of attached NF-kappa-B proteins by p105. Its function is as follows. Constitutes the active form, which associates with RELA/p65 to form the NF-kappa-B p65-p50 complex to form a transcription factor. Together with RELA/p65, binds to the kappa-B consensus sequence 5'-GGRNNYYCC-3', located in the enhancer region of genes involved in immune response and acute phase reactions. This Gallus gallus (Chicken) protein is Nuclear factor NF-kappa-B p105 subunit (NFKB1).